The sequence spans 130 residues: Transcription antitermination protein NusB (130 aa).

Belongs to the NusB family.

Its function is as follows. Involved in transcription antitermination. Required for transcription of ribosomal RNA (rRNA) genes. Binds specifically to the boxA antiterminator sequence of the ribosomal RNA (rrn) operons. The chain is Transcription antitermination protein NusB from Bacillus anthracis (strain A0248).